Reading from the N-terminus, the 227-residue chain is Phosphoribosylformylglycinamidine synthase subunit PurQ (227 aa).

In terms of domain architecture, Glutamine amidotransferase type-1 spans 3-227; it reads FAVIVFPGSN…NWRESHVTAS (225 aa). Cys-86 serves as the catalytic Nucleophile. Residues His-194 and Glu-196 contribute to the active site.

In terms of assembly, part of the FGAM synthase complex composed of 1 PurL, 1 PurQ and 2 PurS subunits.

The protein resides in the cytoplasm. It catalyses the reaction N(2)-formyl-N(1)-(5-phospho-beta-D-ribosyl)glycinamide + L-glutamine + ATP + H2O = 2-formamido-N(1)-(5-O-phospho-beta-D-ribosyl)acetamidine + L-glutamate + ADP + phosphate + H(+). It carries out the reaction L-glutamine + H2O = L-glutamate + NH4(+). The protein operates within purine metabolism; IMP biosynthesis via de novo pathway; 5-amino-1-(5-phospho-D-ribosyl)imidazole from N(2)-formyl-N(1)-(5-phospho-D-ribosyl)glycinamide: step 1/2. Its function is as follows. Part of the phosphoribosylformylglycinamidine synthase complex involved in the purines biosynthetic pathway. Catalyzes the ATP-dependent conversion of formylglycinamide ribonucleotide (FGAR) and glutamine to yield formylglycinamidine ribonucleotide (FGAM) and glutamate. The FGAM synthase complex is composed of three subunits. PurQ produces an ammonia molecule by converting glutamine to glutamate. PurL transfers the ammonia molecule to FGAR to form FGAM in an ATP-dependent manner. PurS interacts with PurQ and PurL and is thought to assist in the transfer of the ammonia molecule from PurQ to PurL. The sequence is that of Phosphoribosylformylglycinamidine synthase subunit PurQ from Shouchella clausii (strain KSM-K16) (Alkalihalobacillus clausii).